We begin with the raw amino-acid sequence, 5255 residues long: Bacitracin synthase 1 (5255 aa).

A domain 1 (isoleucine-activating) region spans residues 39–612 (LHELFEEQAM…IKELSAFIEA (574 aa)). The segment covering 519 to 531 (VDRKALPEPDRTA) has biased composition (basic and acidic residues). Positions 519-542 (VDRKALPEPDRTAGAENEYEAPRN) are disordered. The Carrier 1 domain maps to 539–614 (APRNETEEKL…ELSAFIEANH (76 aa)). An O-(pantetheine 4'-phosphoryl)serine modification is found at Ser574. The segment at 621 to 1037 (TLVTRAADPE…ITWDYVEQIF (417 aa)) is cyclization. The segment at 1109 to 1648 (HHDEVMTYQE…FKNDTIIALD (540 aa)) is domain 2 (cysteine-activating). Carrier domains are found at residues 1580–1655 (LPEN…KNRE), 2616–2691 (APRD…VRRR), 3659–3733 (PPRN…TEET), and 5166–5241 (APRN…LTAE). 4 positions are modified to O-(pantetheine 4'-phosphoryl)serine: Ser1615, Ser2651, Ser3694, and Ser5201. A domain 3 (leucine-activating) region spans residues 2124–2689 (GKAIHQLFEE…IKGLRDISVR (566 aa)). The interval 3164-3732 (DHPAVAFGDE…KDLSRFITEE (569 aa)) is domain 4 (glutamine-activating). The segment at 4668 to 5249 (LHELFEEQAM…AEAESAVSEE (582 aa)) is domain 5 (isoleucine-activating).

The protein belongs to the ATP-dependent AMP-binding enzyme family. As to quaternary structure, large multienzyme complex of BA1, BA2 and BA3. Pantetheine 4'-phosphate is required as a cofactor.

It catalyses the reaction L-glutamate = D-glutamate. The protein operates within antibiotic biosynthesis; bacitracin biosynthesis. Activates five amino acids, incorporates two D-amino acids, releases and cyclizes the mature bacitracin. This chain is Bacitracin synthase 1 (bacA), found in Bacillus licheniformis.